Consider the following 436-residue polypeptide: Enolase (436 aa).

Gln-167 lines the (2R)-2-phosphoglycerate pocket. Residue Glu-209 is the Proton donor of the active site. Mg(2+) is bound by residues Asp-246, Glu-291, and Asp-318. Lys-343, Arg-372, Ser-373, and Lys-394 together coordinate (2R)-2-phosphoglycerate. The active-site Proton acceptor is Lys-343.

Belongs to the enolase family. As to quaternary structure, component of the RNA degradosome, a multiprotein complex involved in RNA processing and mRNA degradation. It depends on Mg(2+) as a cofactor.

It localises to the cytoplasm. It is found in the secreted. The protein localises to the cell surface. The enzyme catalyses (2R)-2-phosphoglycerate = phosphoenolpyruvate + H2O. It participates in carbohydrate degradation; glycolysis; pyruvate from D-glyceraldehyde 3-phosphate: step 4/5. In terms of biological role, catalyzes the reversible conversion of 2-phosphoglycerate (2-PG) into phosphoenolpyruvate (PEP). It is essential for the degradation of carbohydrates via glycolysis. The chain is Enolase from Actinobacillus pleuropneumoniae serotype 5b (strain L20).